A 118-amino-acid chain; its full sequence is Ribonuclease P protein component (118 aa).

Belongs to the RnpA family. As to quaternary structure, consists of a catalytic RNA component (M1 or rnpB) and a protein subunit.

The enzyme catalyses Endonucleolytic cleavage of RNA, removing 5'-extranucleotides from tRNA precursor.. In terms of biological role, RNaseP catalyzes the removal of the 5'-leader sequence from pre-tRNA to produce the mature 5'-terminus. It can also cleave other RNA substrates such as 4.5S RNA. The protein component plays an auxiliary but essential role in vivo by binding to the 5'-leader sequence and broadening the substrate specificity of the ribozyme. The chain is Ribonuclease P protein component from Desulfatibacillum aliphaticivorans.